A 70-amino-acid chain; its full sequence is Melittin (70 aa).

The first 21 residues, 1 to 21 (MKFLVNVALVFMVVYISYIYA), serve as a signal peptide directing secretion. Residues 22–43 (APEPEPAPEPEAEADAEADPEA) constitute a propeptide, removed by a dipeptidylpeptidase. Gly44 is subject to N-formylglycine; partial. Position 69 is a glutamine amide (Gln69).

Belongs to the melittin family. As to quaternary structure, monomer (in solution and for integration into membranes), homotetramer (in solution and potentially as a toroidal pore in membranes), and potenially homomultimer (as a toroidal pore in membranes). In terms of tissue distribution, expressed by the venom gland.

It is found in the secreted. The protein localises to the target cell membrane. In terms of biological role, melittin: Main toxin of bee venom with strong antimicrobial activity and hemolytic activity. It has enhancing effects on bee venom phospholipase A2 activity. This amphipathic toxin binds to negatively charged membrane surface and forms pore by inserting into lipid bilayers inducing the leakage of ions and molecules and the enhancement of permeability that ultimately leads to cell lysis. It acts as a voltage-gated pore with higher selectivity for anions over cations. The ion conductance has been shown to be voltage-dependent. Self-association of melittin in membranes is promoted by high ionic strength, but not by the presence of negatively charged lipids. In vivo, intradermal injection into healthy human volunteers produce sharp pain sensation and an inflammatory response. It produces pain by activating primary nociceptor cells directly and indirectly due to its ability to activate plasma membrane phospholipase A2 and its pore-forming activity. In the context of inflammation and cancer tests, is highly cytotoxic to normal cells, highly induces calcium signaling and almost completely prevents cAMP production. In addition, prevents LPS-induced nitric oxid (NO) synthesis but does not affect the IP3 signaling and pro-inflammatory activation of endothelial cells. Also shows significant antiproliferative activity on the breast cancer cell line MDA-MB-231. Functionally, melittin-S: 1.4-fold less hemolytic and adopts a less organized secondary structure than melittin. Its function is as follows. Melittin-2: Has strong hemolytic activity. This Apis mellifera (Honeybee) protein is Melittin (MELT).